Consider the following 417-residue polypeptide: Echinulin prenyltransferase 1 (417 aa).

Dimethylallyl diphosphate-binding residues include R90, K179, Y181, K248, Y250, Y333, Y398, and Y402.

It belongs to the tryptophan dimethylallyltransferase family.

The catalysed reaction is cyclo(L-tryptophyl-L-alanyl) + dimethylallyl diphosphate = preechinulin + diphosphate. Its pathway is secondary metabolite biosynthesis. It functions in the pathway alkaloid biosynthesis. In terms of biological role, prenyltransferase; part of the gene cluster that mediates the biosynthesis of echinulin family alkaloid. The pathway begins with the biosynthesis of the cyclic dipeptide cyclo-L-Trp-L-Ala (cyclo-TA) by the NRPS echPS via condensation of L-alanine and L-tryptophan. The prenyltransferase echPT1 then catalyzes the first prenylation step, a reverse prenylation reaction at C2, to yield preechinulin. Preechinulin is the substrate of the cytochrome P450 monooxygenase echP450 that catalyzes the formation of the double bond between C10 and C11 to produce neoechulin A. The unique prenyltransferase echPT2 functions as a competitive enzyme with echP450 for preechinulin metabolization and uses preechinulin for effective regiospecific prenylations. Preechinulin is prenylated by echPT2 at C5 or C7. C7-prenylation leads to accumulation of tardioxopiperazine B without further modification by echPT2. In contrast, the C5-prenylated tardioxopiperazine A can be prenylated again by echPT2, predominantly at C7 to form echinulin or less frequently at C4 to give variecolorin L. EchPT2 also accepts neoechilunin A to produce varlecolorin G (prenylation at C5) or isoechinulin A (prenylation at C7). EchPT2 further converts isoechinulin A into dehydroechinulin. Moreover, a yet unidentified enzyme can also convert neoechilunin A into neoechilunin B by introducing a double bond between positions C14 and C17 and thus provides a further substrate to echPT2 for C5 and C7 prenylation. This is Echinulin prenyltransferase 1 from Aspergillus ruber (Eurotium rubrum).